The sequence spans 249 residues: General transcription factor IIF subunit 2 (249 aa).

An N-acetylalanine modification is found at Ala2. Residues Lys22, Lys33, and Lys137 each carry the N6-acetyllysine modification. Ser142 is modified (phosphoserine). DNA contacts are provided by Gly227 and His229. Position 248 is a phosphoserine (Ser248).

Belongs to the TFIIF beta subunit family. As to quaternary structure, heterodimer of an alpha and a beta subunit. Interacts with HTATSF1 and GPBP1. Interacts with URI1. Interacts with GTF2B (via N-terminus); this interaction is inhibited in presence of GTF2F1. Part of TBP-based Pol II pre-initiation complex (PIC), in which Pol II core assembles with general transcription factors and other specific initiation factors including GTF2E1, GTF2E2, GTF2F1, GTF2F2, TCEA1, ERCC2, ERCC3, GTF2H2, GTF2H3, GTF2H4, GTF2H5, GTF2A1, GTF2A2, GTF2B and TBP; this large multi-subunit PIC complex mediates DNA unwinding and targets Pol II core to the transcription start site where the first phosphodiester bond forms.

The protein resides in the nucleus. Functionally, TFIIF is a general transcription initiation factor that binds to RNA polymerase II and helps to recruit it to the initiation complex in collaboration with TFIIB. The chain is General transcription factor IIF subunit 2 (GTF2F2) from Bos taurus (Bovine).